Reading from the N-terminus, the 314-residue chain is MKKKIAEYEVGEQVDVFLLIKTATKGIASNGKPFLTVILQDPSGDIEAKLWDVSPEVEKQYVAETIVKVAGDILNYKGRIQLRVKQIRVANENEVTDISDFVEKAPVKKEDMVEKITQYIFEMRNPNIQRLTRHLLNKHQNEFLEYPAATKNHHEFVSGLAYHVVSMLDLAKAISNLYPSLDKDLLYAGVILHDLGKVIELSGPISTTYTLEGNLLGHISIMVNEIGKAADELQIDAEEVLILQHIVLSHHGKAEWGSPKPPLVKEAEILHYIDNLDAKMNMMDRALGRTKPGEYTERVFALDNRSFYKPSFHN.

The 117-residue stretch at 163–279 folds into the HD domain; that stretch reads HVVSMLDLAK…LHYIDNLDAK (117 aa).

It belongs to the YhaM family.

In terms of biological role, shows a 3'-5' exoribonuclease activity. The polypeptide is 3'-5' exoribonuclease YhaM (Bacillus cereus (strain 03BB102)).